Here is a 710-residue protein sequence, read N- to C-terminus: Early transcription factor 82 kDa subunit (710 aa).

The protein belongs to the poxviridae VETF large subunit family. In terms of assembly, heterodimer of a 70 kDa and a 82 kDa subunit. Part of the early transcription complex composed of ETF, RAP94/OPG109, and the DNA-directed RNA polymerase.

It is found in the virion. Acts with RNA polymerase to initiate transcription from early gene promoters. Is recruited by the RPO-associated protein of 94 kDa RAP94/OPG109 to form the early transcription complex, which also contains the core RNA polymerase. ETF heterodimer binds to early gene promoters. The polypeptide is Early transcription factor 82 kDa subunit (OPG133) (Bos taurus (Bovine)).